Consider the following 207-residue polypeptide: MLSAQLNDYLAEVGLTATEQQKKQLVDFVGMLNKWNKAFNLTSVRDPEQMLIRHIMDSLVVSPHLKGSRFIDVGTGPGLPGIPLAILNPDKEFVLLDSLGKRIRFQKQVQFELGINNISSIESRVEAYQPKDLFDGVLSRAFASIQDMLHWCHHLPKADGCFYALKGQLSEEEMSQMPAGFVVTDTIELKVPKLDEQRHLLRVIKQD.

S-adenosyl-L-methionine contacts are provided by residues glycine 74, leucine 79, 125-126 (VE), and arginine 140.

This sequence belongs to the methyltransferase superfamily. RNA methyltransferase RsmG family.

The protein resides in the cytoplasm. The enzyme catalyses guanosine(527) in 16S rRNA + S-adenosyl-L-methionine = N(7)-methylguanosine(527) in 16S rRNA + S-adenosyl-L-homocysteine. Specifically methylates the N7 position of guanine in position 527 of 16S rRNA. This is Ribosomal RNA small subunit methyltransferase G from Shewanella pealeana (strain ATCC 700345 / ANG-SQ1).